The chain runs to 3658 residues: Serine/threonine-protein kinase SMG1 (3658 aa).

Disordered regions lie at residues 1–99 (MSRR…TYGR) and 116–142 (FTSV…MSYS). A compositionally biased stretch (polar residues) spans 24–33 (NDWQPRTDSA). Basic and acidic residues-rich tracts occupy residues 67-84 (QRHD…DEKG) and 127-136 (ATKDMRKSQE). Position 171 is an N6-acetyllysine (lysine 171). The FAT domain maps to 1281 to 1864 (RELQKSIEVQ…LYPAIVGTIS (584 aa)). The HEAT repeat unit spans residues 1815–1850 (APWRGIIPQLFSRLNHPEVYVRQSICNLLCRVAQDS). Residues 1896 to 1917 (ECEGGSPPASQDSNKDEPKSGL) form a disordered region. The region spanning 2122 to 2461 (VGGTITILPT…MEREITRSLF (340 aa)) is the PI3K/PI4K catalytic domain. The tract at residues 2128–2134 (ILPTKTK) is G-loop. The segment at 2330–2338 (GLGDRHLDN) is catalytic loop. The segment at 2350 to 2374 (HIDYNVCFEKGKSLRVPEKVPFRMT) is activation loop. Position 3547 is a phosphothreonine (threonine 3547). Residues serine 3553 and serine 3567 each carry the phosphoserine modification. Residues 3565–3576 (ATSADTPPSTIP) show a composition bias toward polar residues. A disordered region spans residues 3565-3588 (ATSADTPPSTIPGTGKSIACSPKK). Phosphothreonine occurs at positions 3570 and 3574. An FATC domain is found at 3626–3658 (RRMSVAEQVDYVIKEATNLDNLAQLYEGWTAWV).

Belongs to the PI3/PI4-kinase family. Component of the SMG1C complex composed of SMG1, SMG8 and SMG9; the recruitment of SMG8 to SMG1 N-terminus induces a large conformational change in the SMG1 C-terminal head domain containing the catalytic domain. Component of the transient SURF (SMG1-UPF1-eRF1-eRF3) complex. Part of a complex composed of SMG1, DHX34 and UPF1; within the complex DHX34 acts as a scaffolding protein to facilitate SMG1 phosphorylation of UPF1. Interacts with PRKCI. Interacts with TELO2 and TTI1. Interacts with RUVBL1 and RUVBL2. Interacts with DHX34 (via C-terminus); the interaction is RNA-independent. Requires Mn(2+) as cofactor. In terms of processing, autophosphorylated.

The protein localises to the nucleus. Its subcellular location is the cytoplasm. The enzyme catalyses L-seryl-[protein] + ATP = O-phospho-L-seryl-[protein] + ADP + H(+). It carries out the reaction L-threonyl-[protein] + ATP = O-phospho-L-threonyl-[protein] + ADP + H(+). With respect to regulation, inhibited by caffeine, LY294002 and wortmannin. Serine/threonine protein kinase involved in both mRNA surveillance and genotoxic stress response pathways. Recognizes the substrate consensus sequence [ST]-Q. Plays a central role in nonsense-mediated decay (NMD) of mRNAs containing premature stop codons by phosphorylating UPF1/RENT1. Recruited by release factors to stalled ribosomes together with SMG8 and SMG9 (forming the SMG1C protein kinase complex), and UPF1 to form the transient SURF (SMG1-UPF1-eRF1-eRF3) complex. In EJC-dependent NMD, the SURF complex associates with the exon junction complex (EJC) through UPF2 and allows the formation of an UPF1-UPF2-UPF3 surveillance complex which is believed to activate NMD. Also acts as a genotoxic stress-activated protein kinase that displays some functional overlap with ATM. Can phosphorylate p53/TP53 and is required for optimal p53/TP53 activation after cellular exposure to genotoxic stress. Its depletion leads to spontaneous DNA damage and increased sensitivity to ionizing radiation (IR). May activate PRKCI but not PRKCZ. The chain is Serine/threonine-protein kinase SMG1 from Mus musculus (Mouse).